The primary structure comprises 117 residues: UPF0102 protein Spro_4337 (117 aa).

The protein belongs to the UPF0102 family.

The chain is UPF0102 protein Spro_4337 from Serratia proteamaculans (strain 568).